The chain runs to 629 residues: MFYPDPFDVIIIGGGHAGTEAAMAAARMGQQTLLLTHNIDTLGQMSCNPAIGGIGKGHLVKEVDALGGLMAKAIDQAGIQFRILNASKGPAVRATRAQADRVLYRQAVRTALENQPNLMIFQQAVEDLIVENDRVVGAVTQMGLKFRAKAVVLTVGTFLDGKIHIGLDNYSGGRAGDPPSIPLSRRLRELPLRVGRLKTGTPPRIDARTIDFSVLAQQHGDNPMPVFSFMGNASQHPQQVPCYITHTNEKTHDVIRSNLDRSPMYAGVIEGVGPRYCPSIEDKVMRFADRNQHQIFLEPEGLTSNEIYPNGISTSLPFDVQMQIVRSMQGMENAKIVRPGYAIEYDFFDPRDLKPTLESKFIQGLFFAGQINGTTGYEEAAAQGLLAGLNAARLSADKEGWAPARSQAYLGVLVDDLCTLGTKEPYRMFTSRAEYRLMLREDNADLRLTEIGRELGLVDDERWARFNEKLENIERERQRLKSTWVTPSAEAAAEVNAHLTAPLSREASGEDLLRRPEMTYEKLTSLTPFAPALTDEQAAEQVEIQVKYEGYIARQQDEIEKQLRNENTLLPATLDYRQVSGLSNEVIAKLNDHKPASIGQASRISGVTPAAISILLVWLKKQGMLRRSA.

FAD contacts are provided by residues 13-18, valine 125, and serine 180; that span reads GGGHAG. Residue 273–287 participates in NAD(+) binding; sequence GPRYCPSIEDKVMRF. Position 370 (glutamine 370) interacts with FAD.

This sequence belongs to the MnmG family. Homodimer. Heterotetramer of two MnmE and two MnmG subunits. FAD is required as a cofactor.

It localises to the cytoplasm. In terms of biological role, NAD-binding protein involved in the addition of a carboxymethylaminomethyl (cmnm) group at the wobble position (U34) of certain tRNAs, forming tRNA-cmnm(5)s(2)U34. The polypeptide is tRNA uridine 5-carboxymethylaminomethyl modification enzyme MnmG (Escherichia coli O127:H6 (strain E2348/69 / EPEC)).